Consider the following 247-residue polypeptide: MSGHNKWSTIKHKKGAADAKRGKIFTKIIKEITVAAKLGGGDPDGNPRLRTAIDKAKGENMPKDNVERAIKKGVGGLEGTTYEETTYEGYGPGGTAVLVEVMTDNRNRTVSDVRSIFTKCNGNMGESGCVSWLFDKKGLLVFPKSIDFDKLFEASIEAGADDVTDEDEQYEVLTDPSAFHQVKTALEGAGFKAESAEITMIPQTMVKLEGKNAENMLKLMDRMEDNDDVQNVYANFDISEEEMEKMM.

The protein belongs to the TACO1 family.

Its subcellular location is the cytoplasm. The chain is Probable transcriptional regulatory protein GM21_0933 from Geobacter sp. (strain M21).